The chain runs to 99 residues: Integration host factor subunit alpha (99 aa).

Belongs to the bacterial histone-like protein family. In terms of assembly, heterodimer of an alpha and a beta chain.

In terms of biological role, this protein is one of the two subunits of integration host factor, a specific DNA-binding protein that functions in genetic recombination as well as in transcriptional and translational control. In Nitrosococcus oceani (strain ATCC 19707 / BCRC 17464 / JCM 30415 / NCIMB 11848 / C-107), this protein is Integration host factor subunit alpha.